Reading from the N-terminus, the 361-residue chain is Protein TIFY 8 (361 aa).

Disordered stretches follow at residues 53-78, 113-134, 190-232, and 268-361; these read NKAAKAAMTPSTASASSAGGLGGLSS, RFSGNKRSNSDSHFTTQEHPET, QTAA…RKDL, and SGGS…KEAT. The segment covering 56–78 has biased composition (low complexity); sequence AKAAMTPSTASASSAGGLGGLSS. Polar residues-rich tracts occupy residues 113 to 127 and 208 to 232; these read RFSGNKRSNSDSHFT and SSFTMPNSSKLESFAPSNTGNRKDL. A Tify domain is found at 232-267; it reads LASSTKQMTIFYGGQAHVFDDVHPNKADVIMALAGS. Over residues 333 to 361 the composition is skewed to basic and acidic residues; it reads GREHQGSIISRGRDIRDPVHRSDPEKEAT.

Belongs to the TIFY/JAZ family. As to quaternary structure, interacts with AFPH2/NINJA. Post-translationally, ubiquitinated. Targeted for degradation by the SCF(COI1) E3 ubiquitin ligase-proteasome pathway during jasmonate signaling.

It is found in the nucleus. Its function is as follows. Repressor of jasmonate responses. In Arabidopsis thaliana (Mouse-ear cress), this protein is Protein TIFY 8.